A 331-amino-acid polypeptide reads, in one-letter code: Ferredoxin--NADP reductase 2 (331 aa).

The FAD site is built by glutamate 37, glutamine 45, tyrosine 50, valine 90, phenylalanine 124, aspartate 286, and threonine 327.

The protein belongs to the ferredoxin--NADP reductase type 2 family. Homodimer. Requires FAD as cofactor.

It carries out the reaction 2 reduced [2Fe-2S]-[ferredoxin] + NADP(+) + H(+) = 2 oxidized [2Fe-2S]-[ferredoxin] + NADPH. The chain is Ferredoxin--NADP reductase 2 from Listeria monocytogenes serotype 4b (strain F2365).